We begin with the raw amino-acid sequence, 311 residues long: Methionyl-tRNA formyltransferase (311 aa).

Ser-109–Pro-112 lines the (6S)-5,6,7,8-tetrahydrofolate pocket.

Belongs to the Fmt family.

It catalyses the reaction L-methionyl-tRNA(fMet) + (6R)-10-formyltetrahydrofolate = N-formyl-L-methionyl-tRNA(fMet) + (6S)-5,6,7,8-tetrahydrofolate + H(+). Functionally, attaches a formyl group to the free amino group of methionyl-tRNA(fMet). The formyl group appears to play a dual role in the initiator identity of N-formylmethionyl-tRNA by promoting its recognition by IF2 and preventing the misappropriation of this tRNA by the elongation apparatus. The protein is Methionyl-tRNA formyltransferase of Staphylococcus aureus (strain JH1).